The primary structure comprises 312 residues: Lipoyl synthase (312 aa).

[4Fe-4S] cluster-binding residues include C37, C42, C48, C67, C71, C74, and S281. Positions 52 to 270 (RDGPGTATFM…AVAEREFDFL (219 aa)) constitute a Radical SAM core domain.

The protein belongs to the radical SAM superfamily. Lipoyl synthase family. [4Fe-4S] cluster serves as cofactor.

Its subcellular location is the cytoplasm. It catalyses the reaction [[Fe-S] cluster scaffold protein carrying a second [4Fe-4S](2+) cluster] + N(6)-octanoyl-L-lysyl-[protein] + 2 oxidized [2Fe-2S]-[ferredoxin] + 2 S-adenosyl-L-methionine + 4 H(+) = [[Fe-S] cluster scaffold protein] + N(6)-[(R)-dihydrolipoyl]-L-lysyl-[protein] + 4 Fe(3+) + 2 hydrogen sulfide + 2 5'-deoxyadenosine + 2 L-methionine + 2 reduced [2Fe-2S]-[ferredoxin]. It functions in the pathway protein modification; protein lipoylation via endogenous pathway; protein N(6)-(lipoyl)lysine from octanoyl-[acyl-carrier-protein]: step 2/2. In terms of biological role, catalyzes the radical-mediated insertion of two sulfur atoms into the C-6 and C-8 positions of the octanoyl moiety bound to the lipoyl domains of lipoate-dependent enzymes, thereby converting the octanoylated domains into lipoylated derivatives. The sequence is that of Lipoyl synthase from Halorubrum lacusprofundi (strain ATCC 49239 / DSM 5036 / JCM 8891 / ACAM 34).